A 310-amino-acid polypeptide reads, in one-letter code: Ribonuclease Z (310 aa).

Zn(2+) is bound by residues His63, His65, Asp67, His68, His141, Asp212, and His270. Asp67 serves as the catalytic Proton acceptor.

The protein belongs to the RNase Z family. Homodimer. Zn(2+) serves as cofactor.

It carries out the reaction Endonucleolytic cleavage of RNA, removing extra 3' nucleotides from tRNA precursor, generating 3' termini of tRNAs. A 3'-hydroxy group is left at the tRNA terminus and a 5'-phosphoryl group is left at the trailer molecule.. Its function is as follows. Zinc phosphodiesterase, which displays some tRNA 3'-processing endonuclease activity. Probably involved in tRNA maturation, by removing a 3'-trailer from precursor tRNA. The protein is Ribonuclease Z of Limosilactobacillus fermentum (strain NBRC 3956 / LMG 18251) (Lactobacillus fermentum).